The sequence spans 333 residues: Adenosine deaminase (333 aa).

Zn(2+) is bound by residues histidine 12 and histidine 14. 3 residues coordinate substrate: histidine 14, aspartate 16, and glycine 170. Residue histidine 197 participates in Zn(2+) binding. Residue glutamate 200 is the Proton donor of the active site. Residue aspartate 278 participates in Zn(2+) binding. Aspartate 279 serves as a coordination point for substrate.

This sequence belongs to the metallo-dependent hydrolases superfamily. Adenosine and AMP deaminases family. Adenosine deaminase subfamily. It depends on Zn(2+) as a cofactor.

It catalyses the reaction adenosine + H2O + H(+) = inosine + NH4(+). It carries out the reaction 2'-deoxyadenosine + H2O + H(+) = 2'-deoxyinosine + NH4(+). Its function is as follows. Catalyzes the hydrolytic deamination of adenosine and 2-deoxyadenosine. This Shigella dysenteriae serotype 1 (strain Sd197) protein is Adenosine deaminase.